A 275-amino-acid polypeptide reads, in one-letter code: MAEVNRIHYELEYTEGISQQMRIPERLKIASGSSEEPPGLLNASHSTMMLVPERIVIAGDDNDARFGRPRDLDLIQSTPLETVELKTPPRVLTLNDQPLDFLEPEPAANSTAQPREEMKSHFRSRREQCRSENSTMRRNGQINKHDFASPSPSRAPVRVCPPLISPEDSQNLNSASGVLNYIKSTTRRAYQQVLEVLDDSQRGRASLVTFDASVENTPDDAGLTDAASLRRQIIKLNRRLQLLEHENKERAKREMVMYSLTVAFWLVNSWIWLRR.

Residues 1–255 (MAEVNRIHYE…ENKERAKREM (255 aa)) lie on the Cytoplasmic side of the membrane. The disordered stretch occupies residues 100–171 (DFLEPEPAAN…PLISPEDSQN (72 aa)). Residues 114 to 130 (PREEMKSHFRSRREQCR) are compositionally biased toward basic and acidic residues. Residues 131 to 142 (SENSTMRRNGQI) show a composition bias toward polar residues. The stretch at 223–253 (LTDAASLRRQIIKLNRRLQLLEHENKERAKR) forms a coiled coil. The helical; Anchor for type IV membrane protein transmembrane segment at 256 to 273 (VMYSLTVAFWLVNSWIWL) threads the bilayer. The Extracellular segment spans residues 274–275 (RR).

The protein belongs to the Tango11 family.

It is found in the mitochondrion outer membrane. The protein localises to the peroxisome. Its function is as follows. Plays a role in mitochondrial and peroxisomal fission. Promotes the recruitment and association of the fission mediator dynamin-related protein 1 (DNM1L) to the mitochondrial surface. This is Mitochondrial fission factor homolog A from Danio rerio (Zebrafish).